Consider the following 374-residue polypeptide: Type IV secretion system protein PtlG homolog (374 aa).

A helical membrane pass occupies residues 38-56 (WMFALVAVALSCLLATGIW). The segment at 86–117 (HPREPEPAPLPDMPAAPDPILPQPRPAPPVPP) is disordered. Over residues 92 to 117 (PAPLPDMPAAPDPILPQPRPAPPVPP) the composition is skewed to pro residues.

It belongs to the TrbI/VirB10 family.

The protein localises to the cell membrane. In Bordetella bronchiseptica (strain ATCC BAA-588 / NCTC 13252 / RB50) (Alcaligenes bronchisepticus), this protein is Type IV secretion system protein PtlG homolog (ptlG).